The sequence spans 273 residues: MNNRVHQGHLARKRFGQNFLNDQFVIDSIVSAINPQKGQAMVEIGPGLAALTEPVGERLDQLTVIELDRDLAARLQTHPFLGPKLTIYQQDAMTMNFGELAEKMGQPLRVFGNLPYNISTPLMFHLFSYTDAIADMHFMLQKEVVNRLVAGPNSKAYGRLSVMAQYYCQVIPVLEVPPSAFTPPPKVDSAVVRLVPHRTMPYPVKEVRVLSRITTEAFNQRRKTIRNSLGNLFSVEVLTELGVDPAVRAENISVEQYCKMANWLSNNLPSKES.

Asn18, Leu20, Gly45, Glu66, Asp91, and Asn113 together coordinate S-adenosyl-L-methionine.

This sequence belongs to the class I-like SAM-binding methyltransferase superfamily. rRNA adenine N(6)-methyltransferase family. RsmA subfamily.

The protein resides in the cytoplasm. The catalysed reaction is adenosine(1518)/adenosine(1519) in 16S rRNA + 4 S-adenosyl-L-methionine = N(6)-dimethyladenosine(1518)/N(6)-dimethyladenosine(1519) in 16S rRNA + 4 S-adenosyl-L-homocysteine + 4 H(+). Specifically dimethylates two adjacent adenosines (A1518 and A1519) in the loop of a conserved hairpin near the 3'-end of 16S rRNA in the 30S particle. May play a critical role in biogenesis of 30S subunits. This Klebsiella pneumoniae (strain 342) protein is Ribosomal RNA small subunit methyltransferase A.